The sequence spans 204 residues: Probable nicotinate-nucleotide adenylyltransferase (204 aa).

This sequence belongs to the NadD family.

The catalysed reaction is nicotinate beta-D-ribonucleotide + ATP + H(+) = deamido-NAD(+) + diphosphate. The protein operates within cofactor biosynthesis; NAD(+) biosynthesis; deamido-NAD(+) from nicotinate D-ribonucleotide: step 1/1. In terms of biological role, catalyzes the reversible adenylation of nicotinate mononucleotide (NaMN) to nicotinic acid adenine dinucleotide (NaAD). The polypeptide is Probable nicotinate-nucleotide adenylyltransferase (Dehalococcoides mccartyi (strain CBDB1)).